We begin with the raw amino-acid sequence, 116 residues long: Large ribosomal subunit protein bL19 (116 aa).

Belongs to the bacterial ribosomal protein bL19 family.

Its function is as follows. This protein is located at the 30S-50S ribosomal subunit interface and may play a role in the structure and function of the aminoacyl-tRNA binding site. The sequence is that of Large ribosomal subunit protein bL19 from Pasteurella multocida (strain Pm70).